Here is a 430-residue protein sequence, read N- to C-terminus: Enolase (430 aa).

Glutamine 167 contacts (2R)-2-phosphoglycerate. The active-site Proton donor is glutamate 209. The Mg(2+) site is built by aspartate 245, glutamate 286, and aspartate 313. (2R)-2-phosphoglycerate contacts are provided by lysine 338, arginine 367, serine 368, and lysine 389. The active-site Proton acceptor is lysine 338.

Belongs to the enolase family. Mg(2+) serves as cofactor.

It localises to the cytoplasm. The protein resides in the secreted. Its subcellular location is the cell surface. It carries out the reaction (2R)-2-phosphoglycerate = phosphoenolpyruvate + H2O. The protein operates within carbohydrate degradation; glycolysis; pyruvate from D-glyceraldehyde 3-phosphate: step 4/5. Catalyzes the reversible conversion of 2-phosphoglycerate (2-PG) into phosphoenolpyruvate (PEP). It is essential for the degradation of carbohydrates via glycolysis. This Synechococcus sp. (strain CC9311) protein is Enolase.